The chain runs to 246 residues: ATP synthase subunit a, chloroplastic (246 aa).

The next 4 helical transmembrane spans lie at 35–55 (GQVF…ALVG), 94–114 (VPYI…GALI), 133–153 (INVT…AGLS), and 202–222 (VFAL…GLFA).

This sequence belongs to the ATPase A chain family. In terms of assembly, F-type ATPases have 2 components, CF(1) - the catalytic core - and CF(0) - the membrane proton channel. CF(1) has five subunits: alpha(3), beta(3), gamma(1), delta(1), epsilon(1). CF(0) has four main subunits: a, b, b' and c.

It is found in the plastid. Its subcellular location is the chloroplast thylakoid membrane. Functionally, key component of the proton channel; it plays a direct role in the translocation of protons across the membrane. The chain is ATP synthase subunit a, chloroplastic from Rhodomonas salina (Cryptomonas salina).